Consider the following 122-residue polypeptide: Small ribosomal subunit protein uS13 (122 aa).

The interval 95–122 (GLPVRGQRTHTNARTRKGPAKSIAGKKK) is disordered.

This sequence belongs to the universal ribosomal protein uS13 family. Part of the 30S ribosomal subunit. Forms a loose heterodimer with protein S19. Forms two bridges to the 50S subunit in the 70S ribosome.

In terms of biological role, located at the top of the head of the 30S subunit, it contacts several helices of the 16S rRNA. In the 70S ribosome it contacts the 23S rRNA (bridge B1a) and protein L5 of the 50S subunit (bridge B1b), connecting the 2 subunits; these bridges are implicated in subunit movement. Contacts the tRNAs in the A and P-sites. The sequence is that of Small ribosomal subunit protein uS13 from Nitrobacter hamburgensis (strain DSM 10229 / NCIMB 13809 / X14).